Consider the following 220-residue polypeptide: MQDSSYKKQVTQAFDQSSSTYDRLGVEFFTPMGRRLVDISEPVTGERVLDIGCGRGACLFPAAEKVGSQGCVHGIDIAPGMIEEARKEATERGLRNISLMVMDAETPGFPARSFDLVMGSYSVIFLPDAVGALARYADILDHGGRIAFTSPVFRAGTFPFLPPEFTPLIPQALLEHLPEQWRPEALVRRFNSWLERAEDLVRTLEGCGYARLRQSTSRCG.

The protein belongs to the methyltransferase superfamily. DnrC family. Homodimer.

The enzyme catalyses aklanonate + S-adenosyl-L-methionine = methyl aklanonate + S-adenosyl-L-homocysteine. It participates in antibiotic biosynthesis; daunorubicin biosynthesis. Its pathway is antibiotic biosynthesis; carminomycin biosynthesis. It functions in the pathway antibiotic biosynthesis; rhodomycin biosynthesis. The protein operates within antibiotic biosynthesis; aclacinomycin biosynthesis. Its function is as follows. Involved in the biosynthesis of aklavinone which is an important precursor common to the formation of the clinically significant anthracyclines such as carminomycin, daunorubicin (daunomycin), rhodomycin, aclacinomycin T (aklavin) and aclacinomycin A (aclarubicin). These compounds are aromatic polyketide antibiotics that exhibit high cytotoxicity and are widely applied in the chemotherapy of a variety of cancers. Catalyzes the methyl esterification of aklanonic acid to yield aklanonic acid methyl ester. The polypeptide is Aklanonic acid methyltransferase DauC (dauC) (Streptomyces sp. (strain C5)).